Reading from the N-terminus, the 412-residue chain is Serine hydroxymethyltransferase (412 aa).

Residues leucine 117 and 121–123 each bind (6S)-5,6,7,8-tetrahydrofolate; that span reads GHL. N6-(pyridoxal phosphate)lysine is present on lysine 226. 349 to 351 is a binding site for (6S)-5,6,7,8-tetrahydrofolate; that stretch reads SPF.

This sequence belongs to the SHMT family. As to quaternary structure, homodimer. Pyridoxal 5'-phosphate is required as a cofactor.

Its subcellular location is the cytoplasm. It catalyses the reaction (6R)-5,10-methylene-5,6,7,8-tetrahydrofolate + glycine + H2O = (6S)-5,6,7,8-tetrahydrofolate + L-serine. It functions in the pathway one-carbon metabolism; tetrahydrofolate interconversion. Its pathway is amino-acid biosynthesis; glycine biosynthesis; glycine from L-serine: step 1/1. Functionally, catalyzes the reversible interconversion of serine and glycine with tetrahydrofolate (THF) serving as the one-carbon carrier. This reaction serves as the major source of one-carbon groups required for the biosynthesis of purines, thymidylate, methionine, and other important biomolecules. Also exhibits THF-independent aldolase activity toward beta-hydroxyamino acids, producing glycine and aldehydes, via a retro-aldol mechanism. This Geobacillus kaustophilus (strain HTA426) protein is Serine hydroxymethyltransferase.